Reading from the N-terminus, the 63-residue chain is Large ribosomal subunit protein uL29 (63 aa).

Belongs to the universal ribosomal protein uL29 family.

The chain is Large ribosomal subunit protein uL29 from Mannheimia succiniciproducens (strain KCTC 0769BP / MBEL55E).